The primary structure comprises 569 residues: Endonuclease/exonuclease/phosphatase family domain-containing protein 1 (569 aa).

Positions 1–20 (MGSTLGCHRSIPRDPSDLSH) are disordered. Residue Gly2 is the site of N-myristoyl glycine attachment. Residues 11-20 (IPRDPSDLSH) show a composition bias toward basic and acidic residues. 3 positions are modified to phosphoserine: Ser16, Ser21, and Ser25. In terms of domain architecture, HhH spans 38–67 (ERLNINTATEEELMTLPGVTRAVARSIVEY). A phosphoserine mark is found at Ser106, Ser110, Ser160, and Ser173. The disordered stretch occupies residues 200–224 (SRPPSTHTNGGLTFTAKPHPSPTSL). Positions 202–211 (PPSTHTNGGL) are enriched in polar residues. A Phosphothreonine modification is found at Thr265. The tract at residues 548–569 (EVPRNGNGVTLEPSEANVKHER) is disordered.

The protein is Endonuclease/exonuclease/phosphatase family domain-containing protein 1 (Eepd1) of Rattus norvegicus (Rat).